A 122-amino-acid polypeptide reads, in one-letter code: Large ribosomal subunit protein uL14 (122 aa).

It belongs to the universal ribosomal protein uL14 family. As to quaternary structure, part of the 50S ribosomal subunit. Forms a cluster with proteins L3 and L19. In the 70S ribosome, L14 and L19 interact and together make contacts with the 16S rRNA in bridges B5 and B8.

In terms of biological role, binds to 23S rRNA. Forms part of two intersubunit bridges in the 70S ribosome. This chain is Large ribosomal subunit protein uL14, found in Pelobacter propionicus (strain DSM 2379 / NBRC 103807 / OttBd1).